We begin with the raw amino-acid sequence, 304 residues long: Syntaxin-132 (304 aa).

At methionine 1 the chain carries N-acetylmethionine. The tract at residues 1–30 is disordered; the sequence is MNDLLKGSFELPRGQSSREGDVELGEQQGG. The Cytoplasmic portion of the chain corresponds to 1-275; sequence MNDLLKGSFE…AKSLQKNSRK (275 aa). 2 coiled-coil regions span residues 34–67 and 129–162; these read LEDFFKKVQVIDKQYDKLDKLLKKLQASHEESKS and TLSLKKKLKDKMAEFQVLRENIQQEYRDVVDRRV. The region spanning 204 to 266 is the t-SNARE coiled-coil homology domain; sequence LAEIQERHDA…QSGNTALQRA (63 aa). A helical; Anchor for type IV membrane protein membrane pass occupies residues 276 to 296; the sequence is WMCIAIIILLIVVAVIVVGVL. The Vesicular portion of the chain corresponds to 297–304; that stretch reads KPWKNKSA.

This sequence belongs to the syntaxin family. As to quaternary structure, part of the t-SNARE complex. In terms of tissue distribution, widely expressed in all tissues throughout plant development.

The protein resides in the cell membrane. Functionally, vesicle trafficking protein that functions in the secretory pathway. Acts in coordination with SYP123 to mediate tip-focused membrane trafficking for root hair tip growth. Functions in root hair elongation by forming SNARE complexes with VAMP721,VAMP722 or VAMP724. Involved in cytokinesis. Acts as a cell plate-specific syntaxin, required for the fusion of vesicles at the plane of cell division. Required for secretory trafficking to the plasma membrane during interphase. Involved in the regulation of density of the H(+) ATPase proteins at the plasma membrane of root and shoot in epidermal cells. Modulation of SYP132 expression by auxin affects clathrin-sensitive H(+) ATPase traffic from the plasma membrane, and influences apoplastic acidification and plant growth. The protein is Syntaxin-132 of Arabidopsis thaliana (Mouse-ear cress).